Reading from the N-terminus, the 453-residue chain is Ankyrin repeat and SOCS box protein 16 (453 aa).

ANK repeat units lie at residues 56-85 (CRDPAVHNALFSGDLQQLQILFQDEDAANM), 110-139 (KQTAPLTIAVARGYTDCARHLILQGAELDA), 142-171 (GGRAALHEACAQAHPDCVRLLLTFGAKANV), 175-204 (EGMTPLHLCTSPESLQCAKLLLEAGASVNV), 209-238 (SEVTPLHVAAARGLEQHVALYLQNGADVAL), 242-279 (QGETALNAACAGAEGPGSSRQHEAAARQLLEAGADPQA), and 283-312 (KRHTPLHNACANGCGGLAELLLRHGASPGV). The region spanning 397-453 (FYSSALSMENQPRQLQHLARLAVRAQLGSHCRQAAAQLPLPPLLRDYLLLGVEGRIQ) is the SOCS box domain.

The protein belongs to the ankyrin SOCS box (ASB) family.

Its pathway is protein modification; protein ubiquitination. May be a substrate-recognition component of a SCF-like ECS (Elongin-Cullin-SOCS-box protein) E3 ubiquitin-protein ligase complex which mediates the ubiquitination and subsequent proteasomal degradation of target proteins. In Mus musculus (Mouse), this protein is Ankyrin repeat and SOCS box protein 16 (Asb16).